Here is a 602-residue protein sequence, read N- to C-terminus: Elongation factor 4 (602 aa).

The region spanning 6-188 (DHIRNFSIVA…AIVNKLPAPK (183 aa)) is the tr-type G domain. GTP contacts are provided by residues 18 to 23 (DHGKST) and 135 to 138 (NKID).

It belongs to the TRAFAC class translation factor GTPase superfamily. Classic translation factor GTPase family. LepA subfamily.

It is found in the cell inner membrane. The catalysed reaction is GTP + H2O = GDP + phosphate + H(+). Functionally, required for accurate and efficient protein synthesis under certain stress conditions. May act as a fidelity factor of the translation reaction, by catalyzing a one-codon backward translocation of tRNAs on improperly translocated ribosomes. Back-translocation proceeds from a post-translocation (POST) complex to a pre-translocation (PRE) complex, thus giving elongation factor G a second chance to translocate the tRNAs correctly. Binds to ribosomes in a GTP-dependent manner. The chain is Elongation factor 4 from Brucella suis (strain ATCC 23445 / NCTC 10510).